The sequence spans 86 residues: Molybdopterin synthase sulfur carrier subunit (86 aa).

Residue Gly-86 is modified to 1-thioglycine; alternate. Glycyl adenylate; alternate is present on Gly-86.

Belongs to the MoaD family. MOCS2A subfamily. In terms of assembly, heterotetramer; composed of 2 small (mocs2s) and 2 large (mocs2l) subunits. C-terminal thiocarboxylation occurs in 2 steps, it is first acyl-adenylated (-COAMP) via the hesA/moeB/thiF part of mocs3, then thiocarboxylated (-COSH) via the rhodanese domain of mocs3.

The protein resides in the cytoplasm. The protein operates within cofactor biosynthesis; molybdopterin biosynthesis. Acts as a sulfur carrier required for molybdopterin biosynthesis. Component of the molybdopterin synthase complex that catalyzes the conversion of precursor Z into molybdopterin by mediating the incorporation of 2 sulfur atoms into precursor Z to generate a dithiolene group. In the complex, serves as sulfur donor by being thiocarboxylated (-COSH) at its C-terminus by mocs3. After interaction with mocs2l, the sulfur is then transferred to precursor Z to form molybdopterin. The protein is Molybdopterin synthase sulfur carrier subunit (mocs2s) of Dictyostelium discoideum (Social amoeba).